Consider the following 390-residue polypeptide: Alkanesulfonate monooxygenase (390 aa).

This sequence belongs to the SsuD family.

It catalyses the reaction an alkanesulfonate + FMNH2 + O2 = an aldehyde + FMN + sulfite + H2O + 2 H(+). Catalyzes the desulfonation of aliphatic sulfonates. The protein is Alkanesulfonate monooxygenase of Cupriavidus taiwanensis (strain DSM 17343 / BCRC 17206 / CCUG 44338 / CIP 107171 / LMG 19424 / R1) (Ralstonia taiwanensis (strain LMG 19424)).